A 338-amino-acid polypeptide reads, in one-letter code: Anthranilate phosphoribosyltransferase (338 aa).

Residues Gly-78, 81–82 (GD), Thr-86, 88–91 (NIST), 106–114 (KHGNRSVSS), and Ser-118 contribute to the 5-phospho-alpha-D-ribose 1-diphosphate site. Gly-78 is a binding site for anthranilate. Ser-90 is a Mg(2+) binding site. Asn-109 serves as a coordination point for anthranilate. Arg-164 is an anthranilate binding site. Mg(2+) is bound by residues Asp-223 and Glu-224.

This sequence belongs to the anthranilate phosphoribosyltransferase family. As to quaternary structure, homodimer. Requires Mg(2+) as cofactor.

It carries out the reaction N-(5-phospho-beta-D-ribosyl)anthranilate + diphosphate = 5-phospho-alpha-D-ribose 1-diphosphate + anthranilate. It functions in the pathway amino-acid biosynthesis; L-tryptophan biosynthesis; L-tryptophan from chorismate: step 2/5. Its function is as follows. Catalyzes the transfer of the phosphoribosyl group of 5-phosphorylribose-1-pyrophosphate (PRPP) to anthranilate to yield N-(5'-phosphoribosyl)-anthranilate (PRA). This is Anthranilate phosphoribosyltransferase from Bacillus velezensis (strain DSM 23117 / BGSC 10A6 / LMG 26770 / FZB42) (Bacillus amyloliquefaciens subsp. plantarum).